Reading from the N-terminus, the 315-residue chain is Cysteine proteinase 2 (315 aa).

An N-terminal signal peptide occupies residues 1 to 13 (MFAFICLLAIASA). A propeptide spans 14 to 93 (IDFNTWASKN…NGQVKYLNIQ (80 aa)) (activation peptide). 2 disulfides stabilise this stretch: C115/C161 and C152/C193. The active site involves C118. Residues H259 and N279 contribute to the active site.

It belongs to the peptidase C1 family. In terms of assembly, interacts with cysteine protease inhibitor ICP1. Interacts with cysteine protease inhibitor ICP2.

It is found in the cell membrane. Its subcellular location is the cytoplasmic vesicle. The protein localises to the phagosome. The protein resides in the secreted. The enzyme catalyses Hydrolysis of proteins, including basement membrane collagen and azocasein. Preferential cleavage: Arg-Arg-|-Xaa in small molecule substrates including Z-Arg-Arg-|-NHMec.. Inhibited by cysteine protease inhibitors ICP1 and ICP2. Inhibited by leupeptin and such inhibitors of cysteine proteinases as L-transepoxysuccinyl-L-leucylamido-(4-guanidino)butane, peptidyldiazomethanes, iodoacetic acid and chicken cystatin. Cysteine protease which degrades matrix proteins such as collagen, laminin and fibronectin and thus is involved in the destruction of human tissue. Can abolish adhesion. May play an important role in pathogenicity. The sequence is that of Cysteine proteinase 2 from Entamoeba histolytica (strain ATCC 30459 / HM-1:IMSS / ABRM).